The primary structure comprises 202 residues: Protein GrpE (202 aa).

Residues 21–37 (EELKNEEVKEETHEHEH) show a composition bias toward basic and acidic residues. The interval 21–52 (EELKNEEVKEETHEHEHKHGGHTCCGKHGHKH) is disordered. Residues 38–51 (KHGGHTCCGKHGHK) show a composition bias toward basic residues.

It belongs to the GrpE family. In terms of assembly, homodimer.

It is found in the cytoplasm. Participates actively in the response to hyperosmotic and heat shock by preventing the aggregation of stress-denatured proteins, in association with DnaK and GrpE. It is the nucleotide exchange factor for DnaK and may function as a thermosensor. Unfolded proteins bind initially to DnaJ; upon interaction with the DnaJ-bound protein, DnaK hydrolyzes its bound ATP, resulting in the formation of a stable complex. GrpE releases ADP from DnaK; ATP binding to DnaK triggers the release of the substrate protein, thus completing the reaction cycle. Several rounds of ATP-dependent interactions between DnaJ, DnaK and GrpE are required for fully efficient folding. This chain is Protein GrpE, found in Fusobacterium nucleatum subsp. polymorphum (Fusobacterium polymorphum).